Here is a 66-residue protein sequence, read N- to C-terminus: UPF0370 protein CKO_00315 (66 aa).

The chain crosses the membrane as a helical span at residues 4–24 (LAKYWWILVLVFLVGVLINVI). The segment at 39-66 (KPELPPHRDFNDKWDDDDDWPKKDQPKK) is disordered. Over residues 42–51 (LPPHRDFNDK) the composition is skewed to basic and acidic residues.

Belongs to the UPF0370 family.

It is found in the cell membrane. The sequence is that of UPF0370 protein CKO_00315 from Citrobacter koseri (strain ATCC BAA-895 / CDC 4225-83 / SGSC4696).